Consider the following 343-residue polypeptide: Palmitoyltransferase ZDHHC4 (343 aa).

Over 1–2 (MD) the chain is Lumenal. The helical transmembrane segment at 3 to 23 (FLVLFLFYLAFLLICVVLICI) threads the bilayer. Residues 24–67 (FTKSQRLKAVVLGGAQVCSRVIPQCLQRAVQTLLHQLFHTRHPT) are Cytoplasmic-facing. The chain crosses the membrane as a helical span at residues 68-88 (FIVLHLLLQGLVYAEYTCEVF). Over 89–100 (GYCRELEFSLPY) the chain is Lumenal. The chain crosses the membrane as a helical span at residues 101–121 (LLLPYVLLSVNLVFFTLTCAA). Residues 122–193 (NPGTITKANE…NCIGAWNTRY (72 aa)) are Cytoplasmic-facing. One can recognise a DHHC domain in the interval 149–199 (SRCPTCDLRKPARSKHCRLCDRCVHRFDHHCVWVNNCIGAWNTRYFLIYLL). The S-palmitoyl cysteine intermediate role is filled by cysteine 179. Residues 194 to 214 (FLIYLLTLTASAATIATVTAA) traverse the membrane as a helical segment. Residues 215–255 (FLLRLVTVSDLYQETYLDDVGHFQAVDTVFLIQHLFLAFPR) are Lumenal-facing. A helical transmembrane segment spans residues 256–276 (IVFLLGFVIVLSMLLAGYLCF). Residues 277-343 (ALYLAATNQT…ATPSYKKKEK (67 aa)) lie on the Cytoplasmic side of the membrane. The Di-lysine motif signature appears at 340–343 (KKEK).

Belongs to the DHHC palmitoyltransferase family. In terms of assembly, interacts with CPT1A.

The protein localises to the endoplasmic reticulum membrane. The protein resides in the golgi apparatus membrane. It localises to the cell membrane. It catalyses the reaction L-cysteinyl-[protein] + hexadecanoyl-CoA = S-hexadecanoyl-L-cysteinyl-[protein] + CoA. Functionally, palmitoyltransferase that could catalyze the addition of palmitate onto protein substrates including the D(2) dopamine receptor DRD2, GSK3B or MAVS. Mediates GSK3B palmitoylation to prevent its AKT1-mediated phosphorylation leading to activation of the STAT3 signaling pathway. Also catalyzes MAVS palmitoylation which promotes its stabilization and activation by inhibiting 'Lys-48'- but facilitating 'Lys-63'-linked ubiquitination. This Mus musculus (Mouse) protein is Palmitoyltransferase ZDHHC4.